Reading from the N-terminus, the 367-residue chain is Aspartate-semialdehyde dehydrogenase (367 aa).

NADP(+) contacts are provided by residues 10-13 (RGMV), 37-38 (TS), and Gln-73. Phosphate is bound at residue Arg-102. Cys-135 (acyl-thioester intermediate) is an active-site residue. Cys-135 is subject to S-cysteinyl cysteine; in inhibited form. Gln-162 is a substrate binding site. NADP(+) contacts are provided by residues 165–166 (SG) and Pro-193. Position 241 (Glu-241) interacts with substrate. Lys-244 provides a ligand contact to phosphate. Arg-267 contacts substrate. Residue His-274 is the Proton acceptor of the active site. Gln-350 is an NADP(+) binding site.

The protein belongs to the aspartate-semialdehyde dehydrogenase family. In terms of assembly, homodimer.

It catalyses the reaction L-aspartate 4-semialdehyde + phosphate + NADP(+) = 4-phospho-L-aspartate + NADPH + H(+). The protein operates within amino-acid biosynthesis; L-lysine biosynthesis via DAP pathway; (S)-tetrahydrodipicolinate from L-aspartate: step 2/4. It participates in amino-acid biosynthesis; L-methionine biosynthesis via de novo pathway; L-homoserine from L-aspartate: step 2/3. It functions in the pathway amino-acid biosynthesis; L-threonine biosynthesis; L-threonine from L-aspartate: step 2/5. In terms of biological role, catalyzes the NADPH-dependent formation of L-aspartate-semialdehyde (L-ASA) by the reductive dephosphorylation of L-aspartyl-4-phosphate. The sequence is that of Aspartate-semialdehyde dehydrogenase from Escherichia coli O6:H1 (strain CFT073 / ATCC 700928 / UPEC).